The sequence spans 658 residues: DNA ligase (658 aa).

NAD(+) is bound by residues 31–35 (DFEYD), 80–81 (SL), and glutamate 110. The active-site N6-AMP-lysine intermediate is lysine 112. Arginine 133, glutamate 167, lysine 279, and lysine 303 together coordinate NAD(+). Zn(2+)-binding residues include cysteine 397, cysteine 400, cysteine 415, and cysteine 420. The BRCT domain occupies 584–654 (DTASIYFQKS…KALNIPIINE (71 aa)).

This sequence belongs to the NAD-dependent DNA ligase family. LigA subfamily. It depends on Mg(2+) as a cofactor. Requires Mn(2+) as cofactor.

It catalyses the reaction NAD(+) + (deoxyribonucleotide)n-3'-hydroxyl + 5'-phospho-(deoxyribonucleotide)m = (deoxyribonucleotide)n+m + AMP + beta-nicotinamide D-nucleotide.. In terms of biological role, DNA ligase that catalyzes the formation of phosphodiester linkages between 5'-phosphoryl and 3'-hydroxyl groups in double-stranded DNA using NAD as a coenzyme and as the energy source for the reaction. It is essential for DNA replication and repair of damaged DNA. In Mycoplasma pneumoniae (strain ATCC 29342 / M129 / Subtype 1) (Mycoplasmoides pneumoniae), this protein is DNA ligase.